Here is a 356-residue protein sequence, read N- to C-terminus: Adenine deaminase (356 aa).

Zn(2+) is bound by residues His23, His25, and His211. The active-site Proton donor is the Glu214. Asp292 serves as a coordination point for Zn(2+). Residue Asp293 participates in substrate binding.

This sequence belongs to the metallo-dependent hydrolases superfamily. Adenosine and AMP deaminases family. Adenine deaminase type 2 subfamily. Requires Zn(2+) as cofactor.

The protein localises to the cytoplasm. The protein resides in the nucleus. It carries out the reaction adenine + H2O + H(+) = hypoxanthine + NH4(+). In terms of biological role, catalyzes the hydrolytic deamination of adenine to hypoxanthine. Plays an important role in the purine salvage pathway and in nitrogen catabolism. In Candida albicans (strain SC5314 / ATCC MYA-2876) (Yeast), this protein is Adenine deaminase.